Here is a 505-residue protein sequence, read N- to C-terminus: MAMWRSSDSMVYLPPPSVAKVVNTDDYVTRTGIYYYAGSSRLLTVGHPYFKVGMNGGRKQDIPKVSAYQYRVFRVTLPDPNKFSIPDASLYNPETQRLVWACVGVEVGRGQPLGVGISGHPLYNRQDDTENSPFSSTTNKDSRDNVSVDYKQTQLCIIGCVPAIGEHWGKGKACKPNNVSTGDCPPLELVNTPIEDGDMIDTGYGAMDFGALQETKSEVPLDICQSICKYPDYLQMSADVYGDSMFFCLRREQLFARHFWNRGGMVGDAIPAQLYIKGTDIRANPGSSVYCPSPSGSMVTSDSQLFNKPYWLHKAQGHNNGICWHNQLFLTVVDTTRSTNFTLSTSIESSIPSTYDPSKFKEYTRHVEEYDLQFIFQLCTVTLTTDVMSYIHTMNSSILDNWNFAVAPPPSASLVDTYRYLQSAAITCQKDAPAPEKKDPYDGLKFWNVDLREKFSLELDQFPLGRKFLLQARVRRRPTIGPRKRPAASTSSSSATKHKRKRVSK.

Disordered regions lie at residues serine 118–arginine 143 and arginine 475–lysine 505. Basic residues-rich tracts occupy residues arginine 475–proline 486 and threonine 496–lysine 505.

It belongs to the papillomaviridae L1 protein family. Self-assembles into homopentamers. The capsid has an icosahedral symmetry and consists of 72 capsomers, with each capsomer being a pentamer of L1. Interacts with the minor capsid protein L2; this interaction is necessary for viral genome encapsidation. Interacts with protein E2; this interaction enhances E2-dependent replication and transcription activation.

The protein resides in the virion. It is found in the host nucleus. In terms of biological role, forms an icosahedral capsid with a T=7 symmetry and a 50 nm diameter. The capsid is composed of 72 pentamers linked to each other by disulfide bonds and associated with L2 proteins. Binds to heparan sulfate proteoglycans on cell surface of basal layer keratinocytes to provide initial virion attachment. This binding mediates a conformational change in the virus capsid that facilitates efficient infection. The virion enters the host cell via endocytosis. During virus trafficking, L1 protein dissociates from the viral DNA and the genomic DNA is released to the host nucleus. The virion assembly takes place within the cell nucleus. Encapsulates the genomic DNA together with protein L2. The sequence is that of Major capsid protein L1 from Homo sapiens (Human).